We begin with the raw amino-acid sequence, 115 residues long: DNA-binding protein TV0008 (115 aa).

The interval 18–37 is disordered; sequence LQRQAMQRQMAEEEEKQREI.

It belongs to the PDCD5 family.

This Thermoplasma volcanium (strain ATCC 51530 / DSM 4299 / JCM 9571 / NBRC 15438 / GSS1) protein is DNA-binding protein TV0008.